The following is a 624-amino-acid chain: Bifunctional protein ArgH (624 aa).

The tract at residues 1 to 466 (MALWGGRFSQ…QERDNAGVKV (466 aa)) is argininosuccinate lyase. One can recognise an N-acetyltransferase domain in the interval 464 to 614 (VKVRPARLTD…DEVALEVNLQ (151 aa)). Residues 467–624 (RPARLTDLDA…EQVIIKSSVA (158 aa)) form a probable acetyltransferase region.

In the N-terminal section; belongs to the lyase 1 family. Argininosuccinate lyase subfamily.

It localises to the cytoplasm. It catalyses the reaction 2-(N(omega)-L-arginino)succinate = fumarate + L-arginine. The protein operates within amino-acid biosynthesis; L-arginine biosynthesis; L-arginine from L-ornithine and carbamoyl phosphate: step 3/3. This Aliivibrio fischeri (strain ATCC 700601 / ES114) (Vibrio fischeri) protein is Bifunctional protein ArgH (argH).